The chain runs to 476 residues: mRNA cap guanine-N(7) methyltransferase (476 aa).

The segment covering 1–14 (MANSTKAEEYEKMS) has biased composition (basic and acidic residues). Positions 1–128 (MANSTKAEEY…TGDGTQNKRK (128 aa)) are disordered. Residues 20 to 50 (ASVNSEAESSFSINENTTASGTGLSGKTSVC) are compositionally biased toward polar residues. 3 positions are modified to phosphoserine: Ser-24, Ser-28, and Ser-29. Basic and acidic residues-rich tracts occupy residues 54-68 (DTARKRKEFEDDLVK), 84-93 (LDPEIVPEEK), and 107-117 (RETEDVPKDEY). Ser-118 carries the phosphoserine modification. Residues 126-128 (KRK) carry the Nuclear localization signal motif. In terms of domain architecture, mRNA cap 0 methyltransferase spans 167-475 (SRIFYLRNFN…IYLVFAFEKQ (309 aa)). 176–177 (NN) is a binding site for mRNA. Lys-180, Gly-205, Asp-227, Asp-261, Gln-284, and Tyr-289 together coordinate S-adenosyl-L-methionine.

Belongs to the class I-like SAM-binding methyltransferase superfamily. mRNA cap 0 methyltransferase family. In terms of assembly, interacts with importin alpha, leading to stimulate both RNA-binding and methyltransferase activity. Interaction with importin alpha and beta is required for its nuclear localization, importin beta dissociating in response to RanGTP, allowing RNMT-importin alpha to bind RNA substrates. Interacts with elongating form of polymerase II and RNGTT. Interacts with RAMAC, this interaction significantly enhances RNA-binding and cap methyltransferase activity.

The protein resides in the nucleus. The catalysed reaction is a 5'-end (5'-triphosphoguanosine)-ribonucleoside in mRNA + S-adenosyl-L-methionine = a 5'-end (N(7)-methyl 5'-triphosphoguanosine)-ribonucleoside in mRNA + S-adenosyl-L-homocysteine. Its activity is regulated as follows. Methyltransferase activity is activated by RAMAC. Its function is as follows. Catalytic subunit of the mRNA-capping methyltransferase RNMT:RAMAC complex that methylates the N7 position of the added guanosine to the 5'-cap structure of mRNAs. Binds RNA containing 5'-terminal GpppC. This is mRNA cap guanine-N(7) methyltransferase (RNMT) from Macaca fascicularis (Crab-eating macaque).